Consider the following 272-residue polypeptide: MDNLIKDMRENLNSYSFKVVSDLVKELDVNRDNKAQIKELADLLKEDKRKNVSSLGNRLEKNLNNLIKEEERVKNMYFFDKSFGDYKYVAGVDEVGRGPLAGPIVSAAVILDSSNLDDIILYINDSKKLSEHKREELSEIIKEKALSYSISMCDSKEIDEKGIGYCNNHVFIKACEGLNIKPDLVLSDGYLIKNFNGENKHVIKGDTKSACIACASIIAKVYRDNIMKEYHKKYPQYDFEKNVGYGTKTHVDALKEVGPTEIHRMSFLKNIL.

Residues 87 to 272 (KYVAGVDEVG…HRMSFLKNIL (186 aa)) enclose the RNase H type-2 domain. Residues Asp93, Glu94, and Asp188 each contribute to the a divalent metal cation site.

This sequence belongs to the RNase HII family. It depends on Mn(2+) as a cofactor. Requires Mg(2+) as cofactor.

It is found in the cytoplasm. The catalysed reaction is Endonucleolytic cleavage to 5'-phosphomonoester.. Functionally, endonuclease that specifically degrades the RNA of RNA-DNA hybrids. The protein is Ribonuclease HII of Clostridium perfringens (strain SM101 / Type A).